Consider the following 105-residue polypeptide: Ketoisovalerate oxidoreductase subunit VorD (105 aa).

2 consecutive 4Fe-4S ferredoxin-type domains span residues 44–73 (FMPV…IKED) and 74–103 (GFVA…MVRE). 8 residues coordinate [4Fe-4S] cluster: Cys53, Cys56, Cys59, Cys63, Cys83, Cys86, Cys89, and Cys93.

Heterotetramer of one alpha, one beta, one delta and one gamma chain. [4Fe-4S] cluster serves as cofactor.

It carries out the reaction 3-methyl-2-oxobutanoate + 2 oxidized [2Fe-2S]-[ferredoxin] + CoA = 2-methylpropanoyl-CoA + 2 reduced [2Fe-2S]-[ferredoxin] + CO2 + H(+). The sequence is that of Ketoisovalerate oxidoreductase subunit VorD (vorD) from Pyrococcus horikoshii (strain ATCC 700860 / DSM 12428 / JCM 9974 / NBRC 100139 / OT-3).